The sequence spans 340 residues: Putative esterase YheT (340 aa).

The region spanning 73–312 is the AB hydrolase-1 domain; the sequence is PRLVVFHGLE…TEHGGHVGFI (240 aa). Catalysis depends on charge relay system residues Ser153, Asp280, and His308.

It belongs to the AB hydrolase superfamily. AB hydrolase 4 family.

The protein is Putative esterase YheT (yheT) of Escherichia coli (strain K12).